Here is a 101-residue protein sequence, read N- to C-terminus: Putative fatty acid-binding protein 5-like protein 3 (101 aa).

This sequence belongs to the calycin superfamily. Fatty-acid binding protein (FABP) family.

High specificity for fatty acids. The sequence is that of Putative fatty acid-binding protein 5-like protein 3 (FABP5P3) from Homo sapiens (Human).